The primary structure comprises 194 residues: GTP cyclohydrolase 1 (194 aa).

Cys-83, His-86, and Cys-155 together coordinate Zn(2+).

It belongs to the GTP cyclohydrolase I family. As to quaternary structure, homomer.

It catalyses the reaction GTP + H2O = 7,8-dihydroneopterin 3'-triphosphate + formate + H(+). It functions in the pathway cofactor biosynthesis; 7,8-dihydroneopterin triphosphate biosynthesis; 7,8-dihydroneopterin triphosphate from GTP: step 1/1. This is GTP cyclohydrolase 1 from Streptococcus pyogenes serotype M49 (strain NZ131).